We begin with the raw amino-acid sequence, 194 residues long: Peptidyl-tRNA hydrolase (194 aa).

His17 is a binding site for tRNA. Residue His22 is the Proton acceptor of the active site. Phe68, Asn70, and Asn116 together coordinate tRNA.

It belongs to the PTH family. In terms of assembly, monomer.

It is found in the cytoplasm. The catalysed reaction is an N-acyl-L-alpha-aminoacyl-tRNA + H2O = an N-acyl-L-amino acid + a tRNA + H(+). Functionally, hydrolyzes ribosome-free peptidyl-tRNAs (with 1 or more amino acids incorporated), which drop off the ribosome during protein synthesis, or as a result of ribosome stalling. Catalyzes the release of premature peptidyl moieties from peptidyl-tRNA molecules trapped in stalled 50S ribosomal subunits, and thus maintains levels of free tRNAs and 50S ribosomes. The protein is Peptidyl-tRNA hydrolase of Xanthomonas oryzae pv. oryzae (strain MAFF 311018).